A 388-amino-acid chain; its full sequence is Succinyl-diaminopimelate desuccinylase (388 aa).

Histidine 72 contacts Zn(2+). Aspartate 74 is a catalytic residue. A Zn(2+)-binding site is contributed by aspartate 105. The active-site Proton acceptor is the glutamate 139. Positions 140, 168, and 353 each coordinate Zn(2+).

This sequence belongs to the peptidase M20A family. DapE subfamily. As to quaternary structure, homodimer. The cofactor is Zn(2+). It depends on Co(2+) as a cofactor.

It catalyses the reaction N-succinyl-(2S,6S)-2,6-diaminopimelate + H2O = (2S,6S)-2,6-diaminopimelate + succinate. Its pathway is amino-acid biosynthesis; L-lysine biosynthesis via DAP pathway; LL-2,6-diaminopimelate from (S)-tetrahydrodipicolinate (succinylase route): step 3/3. Its function is as follows. Catalyzes the hydrolysis of N-succinyl-L,L-diaminopimelic acid (SDAP), forming succinate and LL-2,6-diaminopimelate (DAP), an intermediate involved in the bacterial biosynthesis of lysine and meso-diaminopimelic acid, an essential component of bacterial cell walls. The sequence is that of Succinyl-diaminopimelate desuccinylase from Orientia tsutsugamushi (strain Boryong) (Rickettsia tsutsugamushi).